Consider the following 262-residue polypeptide: Large ribosomal subunit protein eL8B (262 aa).

Positions 1 to 36 are disordered; that stretch reads MAPKGKKVAPAPLATKSAKSSESKNPLFESTPKNFG.

This sequence belongs to the eukaryotic ribosomal protein eL8 family. Component of the large ribosomal subunit. Mature ribosomes consist of a small (40S) and a large (60S) subunit. The 40S subunit contains about 32 different proteins and 1 molecule of RNA (18S). The 60S subunit contains 45 different proteins and 3 molecules of RNA (25S, 5.8S and 5S).

It localises to the cytoplasm. Component of the ribosome, a large ribonucleoprotein complex responsible for the synthesis of proteins in the cell. The small ribosomal subunit (SSU) binds messenger RNAs (mRNAs) and translates the encoded message by selecting cognate aminoacyl-transfer RNA (tRNA) molecules. The large subunit (LSU) contains the ribosomal catalytic site termed the peptidyl transferase center (PTC), which catalyzes the formation of peptide bonds, thereby polymerizing the amino acids delivered by tRNAs into a polypeptide chain. The nascent polypeptides leave the ribosome through a tunnel in the LSU and interact with protein factors that function in enzymatic processing, targeting, and the membrane insertion of nascent chains at the exit of the ribosomal tunnel. The protein is Large ribosomal subunit protein eL8B of Candida albicans (strain SC5314 / ATCC MYA-2876) (Yeast).